The chain runs to 236 residues: Purine nucleoside phosphorylase DeoD-type 2 (236 aa).

Residue H5 coordinates a purine D-ribonucleoside. Residues G21, R25, R44, and 88–91 (RVGS) each bind phosphate. A purine D-ribonucleoside contacts are provided by residues 180-182 (DME) and 204-205 (SD). Catalysis depends on D205, which acts as the Proton donor.

The protein belongs to the PNP/UDP phosphorylase family. Homohexamer; trimer of homodimers.

The enzyme catalyses a purine D-ribonucleoside + phosphate = a purine nucleobase + alpha-D-ribose 1-phosphate. It carries out the reaction a purine 2'-deoxy-D-ribonucleoside + phosphate = a purine nucleobase + 2-deoxy-alpha-D-ribose 1-phosphate. Its function is as follows. Catalyzes the reversible phosphorolytic breakdown of the N-glycosidic bond in the beta-(deoxy)ribonucleoside molecules, with the formation of the corresponding free purine bases and pentose-1-phosphate. The chain is Purine nucleoside phosphorylase DeoD-type 2 from Photobacterium profundum (strain SS9).